Consider the following 225-residue polypeptide: Small ribosomal subunit protein uS2 (225 aa).

Over residues 1–13 the composition is skewed to basic and acidic residues; the sequence is MAEAKPALEKEAA. The interval 1–33 is disordered; that stretch reads MAEAKPALEKEAAVKTGSIPSESEDETASHKEG.

Belongs to the universal ribosomal protein uS2 family.

The protein is Small ribosomal subunit protein uS2 of Methanosarcina acetivorans (strain ATCC 35395 / DSM 2834 / JCM 12185 / C2A).